A 495-amino-acid polypeptide reads, in one-letter code: Cytochrome P450 monooxygenase FrzC (495 aa).

A helical transmembrane segment spans residues 8-28 (GLVVGLWVTYHILLGTYNVFF). Cys-437 contributes to the heme binding site.

This sequence belongs to the cytochrome P450 family. The cofactor is heme.

The protein localises to the membrane. The enzyme catalyses (S,S)-2,5-di-(p-hydroxybenzyl)piperazine + reduced [NADPH--hemoprotein reductase] + O2 = (1S,4S)-4-[(4-hydroxyphenyl)methyl]-2,5-diazaspiro[bicyclo[3.2.1]octane-6,1'-cyclohexane]-2',5'-dien-4'-one + oxidized [NADPH--hemoprotein reductase] + 2 H2O + H(+). It participates in secondary metabolite biosynthesis. Its function is as follows. Cytochrome P450 monooxygenase; part of the gene cluster that mediates the biosynthesis of the alkaloid (-)-FR901483, a potent immunosuppressant that shows efficacy in animal models and a probable inhibitor of purine nucleotide biosynthesis by targeting phosphoribosylpyrophosphate amidotransferase (PPAT). Within the pathway, FrzC catalyzes the coupling between N10 and C1' to produce a 1,4-diazabicyclo[3.2.1]octane spiro-fused to a 2,5-cyclohexadienone. FrzC probably first catalyzes homolysis of the N-H bond to generate the N10 radical which is followed by an O-H abstraction to give the phenolic radical which can be delocalized to C1'. Radical coupling between N10 and C1' then forms. The biosynthesis of (-)-FR901483 starts with the condensation of two L-tyrosines to yield (S,S)-dityrosyl-piperazine. This process occurs in 3 steps with the non-canonical nonribosomal peptide synthetase FrzA catalyzing the reduction of L-tyrosine into L-tyrosinal, the spontaneous condensation of 2 L-tyrosinal units, and the subsequent reduction by the NmrA-like family domain-containing oxidoreductase FrzB. The cytochrome P450 monooxygenase FrzC then performs coupling between N10 and C1' to morph the piperazine into a 1,4-diazabicyclo[3.2.1]octane spiro-fused to a 2,5-cyclohexadienone. The dienone portion is further reduced to cyclohexanone by the flavin-dependent reductase FrzD. The methyltranserases (MTs) FrzE and FrzF are then involved in the methylation at the C10' amine and the C4 phenolic oxygen, respectively. The order of the two MTs appear to be interchangeable. Cleavage of the C9-N10' bond by the dioxygenase FrzG then leads to formation of a conjugated iminium. In addition to the oxidation of C9, an additional dehydrogenation between C7 and C8 can occur to give a likely shunt product. The next biosynthetic step is the intramolecular aldol condensation catalyzed by the newly identified aldolase FrzH to yield an aza-tricyclic product with the formation of a C9-C3' bond. The short-chain dehydrogenase/reductase FrzI then produces dephospho-(-)-FR901483 that is phosphorylated at C4'-OH into (-)-FR901483 by the phosphotransferase FrzJ. The protein is Cytochrome P450 monooxygenase FrzC of Cladobotryum sp.